A 708-amino-acid chain; its full sequence is Chaperonin-containing T-complex member BBS12 (708 aa).

Belongs to the TCP-1 chaperonin family. BBS12 subfamily. As to quaternary structure, component of the chaperonin-containing T-complex (TRiC), a heterooligomeric complex of about 850 to 900 kDa that forms two stacked rings, 12 to 16 nm in diameter. Interacts with MKKS.

It localises to the cell projection. The protein resides in the cilium. Its function is as follows. Component of the chaperonin-containing T-complex (TRiC), a molecular chaperone complex that assists the folding of proteins upon ATP hydrolysis. As part of the TRiC complex may play a role in the assembly of BBSome, a complex involved in ciliogenesis regulating transports vesicles to the cilia. Involved in adipogenic differentiation. The polypeptide is Chaperonin-containing T-complex member BBS12 (Bbs12) (Mus musculus (Mouse)).